A 314-amino-acid polypeptide reads, in one-letter code: GDP-L-fucose synthase (314 aa).

NADP(+) is bound by residues 15–21 and 109–112; these read GHKGMVG and LGSS. The active-site Proton donor/acceptor is the Tyr140. NADP(+)-binding positions include Lys144, 167–170, and His183; that span reads PTNL. Positions 191, 206, 213, and 273 each coordinate substrate.

The protein belongs to the NAD(P)-dependent epimerase/dehydratase family. Fucose synthase subfamily.

It catalyses the reaction GDP-beta-L-fucose + NADP(+) = GDP-4-dehydro-alpha-D-rhamnose + NADPH + H(+). Its pathway is nucleotide-sugar biosynthesis; GDP-L-fucose biosynthesis via de novo pathway; GDP-L-fucose from GDP-alpha-D-mannose: step 2/2. Catalyzes the two-step NADP-dependent conversion of GDP-4-dehydro-6-deoxy-D-mannose to GDP-fucose, involving an epimerase and a reductase reaction. This is GDP-L-fucose synthase from Sinorhizobium fredii (strain NBRC 101917 / NGR234).